A 446-amino-acid polypeptide reads, in one-letter code: MGMGGQSGEGCSSGDCVKPEAQYSWEEIQKHNLKTDKWLVIERKVYNISQWVKRHPGGMRIIGHYAGEDATDAFHAFHPDKTFVRKFLKPLYIGELAENEPSQDRDKNAQQVEDFRALRKTAEDMRLFKSNPAFFIFYLFHILLIEFLAWCTLHYLGTGWIPAIITVLLLTISQAQAGWLQHDFGHLSVFEKSKWNHLVHKFVIGHLKGASANWWNHRHFQHHAKPNIFSKDPDVNMVNVFVLGGTQPVEFGKKGIKYLPYNHQHLYFFLIGPPLLIPVYFTVQIIKTMIARKDWVDLAWSVSYYVRFFFTFVPFFGVLGSLALLNAVRFFESHWFVWVTQMNHLPMAIEHEKYQDWLNTQLAATCNIEPSFFNDWFSGHLNFQIEHHLFPTMPRHNYWKIAPLVRSLCSKYNVTYEEKCLYHGFRDVLRSLKKSGQLWLDAYLHK.

Topologically, residues 1 to 132 (MGMGGQSGEG…EDMRLFKSNP (132 aa)) are cytoplasmic. In terms of domain architecture, Cytochrome b5 heme-binding spans 20–97 (EAQYSWEEIQ…LKPLYIGELA (78 aa)). A helical transmembrane segment spans residues 133–153 (AFFIFYLFHILLIEFLAWCTL). A topological domain (lumenal) is located at residue H154. Residues 155 to 175 (YLGTGWIPAIITVLLLTISQA) form a helical membrane-spanning segment. Over 176 to 265 (QAGWLQHDFG…IKYLPYNHQH (90 aa)) the chain is Cytoplasmic. The Histidine box-1 motif lies at 182-186 (HDFGH). The Histidine box-2 signature appears at 219-223 (HFQHH). A helical membrane pass occupies residues 266–286 (LYFFLIGPPLLIPVYFTVQII). Topologically, residues 287 to 307 (KTMIARKDWVDLAWSVSYYVR) are lumenal. Residues 308-328 (FFFTFVPFFGVLGSLALLNAV) traverse the membrane as a helical segment. Topologically, residues 329–446 (RFFESHWFVW…QLWLDAYLHK (118 aa)) are cytoplasmic. A Histidine box-3 motif is present at residues 384–388 (QIEHH).

Belongs to the fatty acid desaturase type 1 family.

Its subcellular location is the endoplasmic reticulum membrane. Its pathway is lipid metabolism; polyunsaturated fatty acid biosynthesis. Component of a lipid metabolic pathway that catalyzes biosynthesis of highly unsaturated fatty acids (HUFA) from precursor essential polyunsaturated fatty acids (PUFA) linoleic acid (LA) (18:2n-6) and alpha-linolenic acid (ALA) (18:3n-3). Catalyzes the first and rate limiting step in this pathway which is the desaturation of LA (18:2n-6) and ALA (18:3n-3) into gamma-linoleic acid (GLA) (18:3n-6) and stearidonic acid (18:4n-3) respectively and other desaturation steps. Highly unsaturated fatty acids (HUFA) play pivotal roles in many biological functions. This Xenopus laevis (African clawed frog) protein is Fatty acid desaturase 2 (fads2).